The sequence spans 201 residues: Ras-related protein RabA (201 aa).

A GTP-binding site is contributed by 15-22 (GDSGVGKS). An Effector region motif is present at residues 37 to 45 (YISTIGVDF). GTP contacts are provided by residues 63-67 (DTAGQ) and 121-124 (NKSD). Cysteine 198 is subject to Cysteine methyl ester. The S-geranylgeranyl cysteine moiety is linked to residue cysteine 198. A propeptide spans 199 to 201 (IIN) (removed in mature form).

It belongs to the small GTPase superfamily. Rab family.

It is found in the cell membrane. This is Ras-related protein RabA (rabA) from Dictyostelium discoideum (Social amoeba).